We begin with the raw amino-acid sequence, 367 residues long: MAERVHRKNTRPVKVGNLTIGGNDEIIIQSMTTTKTHDVEATVAEINRLEEAGCQIVRVACPDMRAAEAISEIKKRINIPLVVDIHFNYKFALKAIEGGADKIRINPGNIGKRENVEAVVKAAKEKGIPIRIGVNAGSLERHLLEKYGYPTADAMVESALHHIRILEELDFYDIIVSMKASDVRLAIEAYDKASRAFDYPLHLGITESGTLFAGTVKSAAGIGALLHMGIGNTLRISLSADPVEEVKVARELLKSFGLAANAATLISCPTCGRIEIDLISIANEVEEYISKIKAPIKVAVLGCAVNGPGEAREADIGIAGARGEGLLFMKGEIVRKVPEETMVEELKKEIDKLAEEHYAKQREAQPN.

The [4Fe-4S] cluster site is built by C268, C271, C303, and E310.

Belongs to the IspG family. [4Fe-4S] cluster serves as cofactor.

The enzyme catalyses (2E)-4-hydroxy-3-methylbut-2-enyl diphosphate + oxidized [flavodoxin] + H2O + 2 H(+) = 2-C-methyl-D-erythritol 2,4-cyclic diphosphate + reduced [flavodoxin]. It functions in the pathway isoprenoid biosynthesis; isopentenyl diphosphate biosynthesis via DXP pathway; isopentenyl diphosphate from 1-deoxy-D-xylulose 5-phosphate: step 5/6. In terms of biological role, converts 2C-methyl-D-erythritol 2,4-cyclodiphosphate (ME-2,4cPP) into 1-hydroxy-2-methyl-2-(E)-butenyl 4-diphosphate. The chain is 4-hydroxy-3-methylbut-2-en-1-yl diphosphate synthase (flavodoxin) from Shouchella clausii (strain KSM-K16) (Alkalihalobacillus clausii).